The primary structure comprises 429 residues: ATP-dependent RNA helicase RhlB (429 aa).

The Q motif signature appears at 9–37 (EKFAQMGLEPEVLAGLESKGFHYCTPIQA). The Helicase ATP-binding domain maps to 40–219 (LPLLVEGHDL…YEHMNHPEHV (180 aa)). Position 53–60 (53–60 (AQTGTGKT)) interacts with ATP. The short motif at 165 to 168 (DEAD) is the DEAD box element. The 148-residue stretch at 243–390 (KMLLLLSLME…VSKYDREALL (148 aa)) folds into the Helicase C-terminal domain. The interval 395–429 (APKRVVRNRQPVNRNMRDRQGGGNSNNRRRPPRKS) is disordered.

This sequence belongs to the DEAD box helicase family. RhlB subfamily. As to quaternary structure, component of the RNA degradosome, which is a multiprotein complex involved in RNA processing and mRNA degradation.

It localises to the cytoplasm. The enzyme catalyses ATP + H2O = ADP + phosphate + H(+). Its function is as follows. DEAD-box RNA helicase involved in RNA degradation. Has RNA-dependent ATPase activity and unwinds double-stranded RNA. The protein is ATP-dependent RNA helicase RhlB of Aeromonas salmonicida (strain A449).